The chain runs to 245 residues: Ninjurin-A (245 aa).

Topologically, residues 1-170 (MSNLEHITLE…TSSQHPYFYP (170 aa)) are extracellular. N-linked (GlcNAc...) asparagine glycans are attached at residues asparagine 19 and asparagine 28. Residues 32–101 (HSYGGAIDGR…NVNVNVPNGG (70 aa)) are disordered. Low complexity predominate over residues 92 to 101 (NVNVNVPNGG). The interval 135 to 146 (KKTLAQGMMDLA) is helix alpha1. The helix alpha2 stretch occupies residues 149–165 (SANANQLRYVLETSSQH). The chain crosses the membrane as a helical span at residues 171-191 (SLLFISLSIIFQIAVGVGLIL). The Cytoplasmic portion of the chain corresponds to 192-211 (NGQYNIKNGHDICRANRINN). Residues 212–232 (YTVSGIFIVTVVNVLISAFTV) form a helical membrane-spanning segment. Residues 233–245 (DRDTVPALPANTT) are Extracellular-facing.

This sequence belongs to the ninjurin family. As to quaternary structure, homooligomer. In terms of processing, cleaved by Mmp1 protease to generate the Secreted ninjurin-A form.

The protein resides in the cell membrane. The protein localises to the secreted. Functionally, effector of non-apoptotic necrotic cell death that mediates plasma membrane rupture (cytolysis): oligomerizes in response to death stimuli and promotes plasma membrane rupture by introducing hydrophilic faces of 2 alpha helices into the hydrophobic membrane, leading to release intracellular molecules that propagate the inflammatory response. Also acts as a homophilic transmembrane adhesion molecule that promotes cell adhesion by mediating homophilic interactions via its extracellular region. Secreted form generated by cleavage, which acts as a negative regulator of cell adhesion. Promotes the loss of cell adhesion in a cell non-autonomous manner. The polypeptide is Ninjurin-A (Drosophila melanogaster (Fruit fly)).